Consider the following 210-residue polypeptide: Urease accessory protein UreE (210 aa).

The segment at 144 to 210 is disordered; that stretch reads PEGGAYAAGG…GHAHPHSLAR (67 aa). Basic and acidic residues predominate over residues 156–202; sequence HGHDHPHHDHGHDHAHAHAHGTEACDHEHSHDHDCGHHHDHGQDYGH.

It belongs to the UreE family.

It localises to the cytoplasm. In terms of biological role, involved in urease metallocenter assembly. Binds nickel. Probably functions as a nickel donor during metallocenter assembly. The chain is Urease accessory protein UreE from Paracidovorax citrulli (strain AAC00-1) (Acidovorax citrulli).